Here is a 289-residue protein sequence, read N- to C-terminus: Polyamine aminopropyltransferase (289 aa).

A PABS domain is found at 5-245 (PGPIVLVEPL…YAVNYILGSL (241 aa)). Glutamine 36 is a binding site for S-methyl-5'-thioadenosine. Spermidine is bound by residues histidine 67 and glutamate 91. Residues aspartate 111 and 143–144 (DG) contribute to the S-methyl-5'-thioadenosine site. Aspartate 164 (proton acceptor) is an active-site residue.

It belongs to the spermidine/spermine synthase family. In terms of assembly, homodimer or homotetramer.

It is found in the cytoplasm. It carries out the reaction S-adenosyl 3-(methylsulfanyl)propylamine + putrescine = S-methyl-5'-thioadenosine + spermidine + H(+). It participates in amine and polyamine biosynthesis; spermidine biosynthesis; spermidine from putrescine: step 1/1. Functionally, catalyzes the irreversible transfer of a propylamine group from the amino donor S-adenosylmethioninamine (decarboxy-AdoMet) to putrescine (1,4-diaminobutane) to yield spermidine. The sequence is that of Polyamine aminopropyltransferase from Pyrobaculum arsenaticum (strain DSM 13514 / JCM 11321 / PZ6).